Here is a 351-residue protein sequence, read N- to C-terminus: Protein arginine N-methyltransferase 1-B (351 aa).

The SAM-dependent MTase PRMT-type domain occupies 30–331 (KDYYFDSYAH…KNNRDLDFTV (302 aa)). Residues His-43, Arg-52, Gly-76, Glu-98, and Glu-127 each coordinate S-adenosyl-L-methionine. Residues Glu-142 and Glu-151 contribute to the active site.

This sequence belongs to the class I-like SAM-binding methyltransferase superfamily. Protein arginine N-methyltransferase family. As to quaternary structure, homodimer. Homooctamer; individual homodimers associates to form a homooctamer and homooligomerization is required for proper localization to the cell membrane. Individual homodimers can associate to form a homohexamer. Component of a complex with lsm14a/rap55a. Interacts with cirbp. From the onset of gastrulation, expressed in dorsal mesoderm, and in dorsal and ventral ectoderm. At the neurula and tail bud stages, expression is restricted to the neuroectoderm, with highest expression in the anterior neural plate.

The protein localises to the nucleus. Its subcellular location is the nucleoplasm. It is found in the cytoplasm. The protein resides in the cytosol. The catalysed reaction is L-arginyl-[protein] + 2 S-adenosyl-L-methionine = N(omega),N(omega)-dimethyl-L-arginyl-[protein] + 2 S-adenosyl-L-homocysteine + 2 H(+). It carries out the reaction L-arginyl-[protein] + S-adenosyl-L-methionine = N(omega)-methyl-L-arginyl-[protein] + S-adenosyl-L-homocysteine + H(+). The enzyme catalyses N(omega)-methyl-L-arginyl-[protein] + S-adenosyl-L-methionine = N(omega),N(omega)-dimethyl-L-arginyl-[protein] + S-adenosyl-L-homocysteine + H(+). Its function is as follows. Arginine methyltransferase that methylates (mono and asymmetric dimethylation) the guanidino nitrogens of arginyl residues present in target proteins. Constitutes the main enzyme that mediates monomethylation and asymmetric dimethylation of histone H4 'Arg-4' (H4R3me1 and H4R3me2a, respectively), a specific tag for epigenetic transcriptional activation. Methylates ilf3 to regulate its DNA-binding activity. Required for neural induction, playing a key role in the control of epidermal versus neural cell fate choice. The protein is Protein arginine N-methyltransferase 1-B (prmt1-b) of Xenopus laevis (African clawed frog).